Consider the following 432-residue polypeptide: D-amino acid dehydrogenase (432 aa).

An FAD-binding site is contributed by 3–17 (VVILGSGVVGVTSAW).

It belongs to the DadA oxidoreductase family. FAD is required as a cofactor.

It localises to the cell inner membrane. The enzyme catalyses a D-alpha-amino acid + A + H2O = a 2-oxocarboxylate + AH2 + NH4(+). The protein operates within amino-acid degradation; D-alanine degradation; NH(3) and pyruvate from D-alanine: step 1/1. Oxidative deamination of D-amino acids. In Salmonella typhi, this protein is D-amino acid dehydrogenase.